The primary structure comprises 1520 residues: Glutamate synthase [NADPH] large chain (1520 aa).

The active-site For GATase activity is C22. The Glutamine amidotransferase type-2 domain occupies 22–415 (CGIGLYAHLK…PGKMLLIDLE (394 aa)). A disordered region spans residues 890–913 (GGKSNSGEGGEDPKRFVPDENGDD). Positions 900-913 (EDPKRFVPDENGDD) are enriched in basic and acidic residues. An FMN-binding site is contributed by 1060-1112 (LAEAHQTLMLNGLRDRVVLETDGKLMTGRDVVMAALLGAEEFGFATAPLVVLG). [3Fe-4S] cluster contacts are provided by C1113, C1119, and C1124.

The protein belongs to the glutamate synthase family. Aggregate of 4 catalytic active heterodimers, consisting of a large and a small subunit. The cofactor is [3Fe-4S] cluster. Requires FAD as cofactor. FMN is required as a cofactor.

The enzyme catalyses 2 L-glutamate + NADP(+) = L-glutamine + 2-oxoglutarate + NADPH + H(+). It participates in amino-acid biosynthesis; L-glutamate biosynthesis via GLT pathway; L-glutamate from 2-oxoglutarate and L-glutamine (NADP(+) route): step 1/1. Its pathway is energy metabolism; nitrogen metabolism. The protein is Glutamate synthase [NADPH] large chain (gltA) of Bacillus subtilis (strain 168).